The primary structure comprises 92 residues: UPF0250 protein Avin_08440 (92 aa).

The protein belongs to the UPF0250 family.

The protein is UPF0250 protein Avin_08440 of Azotobacter vinelandii (strain DJ / ATCC BAA-1303).